The following is a 194-amino-acid chain: dCTP deaminase (194 aa).

DCTP is bound by residues 110–115 (RSSLAR), D128, 136–138 (VLE), Y171, K178, and Q182. E138 serves as the catalytic Proton donor/acceptor.

The protein belongs to the dCTP deaminase family. As to quaternary structure, homotrimer.

It carries out the reaction dCTP + H2O + H(+) = dUTP + NH4(+). It participates in pyrimidine metabolism; dUMP biosynthesis; dUMP from dCTP (dUTP route): step 1/2. Its function is as follows. Catalyzes the deamination of dCTP to dUTP. The protein is dCTP deaminase of Haemophilus ducreyi (strain 35000HP / ATCC 700724).